We begin with the raw amino-acid sequence, 63 residues long: uncharacterized protein (63 aa).

Its subcellular location is the mitochondrion. This is an uncharacterized protein from Marchantia polymorpha (Common liverwort).